The following is a 259-amino-acid chain: 5'-nucleotidase SurE (259 aa).

Residues Asp-8, Asp-9, Ser-39, and Asn-96 each coordinate a divalent metal cation.

Belongs to the SurE nucleotidase family. It depends on a divalent metal cation as a cofactor.

The protein resides in the cytoplasm. The enzyme catalyses a ribonucleoside 5'-phosphate + H2O = a ribonucleoside + phosphate. Nucleotidase that shows phosphatase activity on nucleoside 5'-monophosphates. The chain is 5'-nucleotidase SurE from Pelotomaculum thermopropionicum (strain DSM 13744 / JCM 10971 / SI).